Reading from the N-terminus, the 458-residue chain is Vacuolar basic amino acid transporter 3 (458 aa).

Residues 1 to 9 lie on the Cytoplasmic side of the membrane; it reads MNMLIVGRV. The chain crosses the membrane as a helical span at residues 10–30; sequence VASVGGSGLQTLCFVIGCTMV. The Vacuolar segment spans residues 31-36; that stretch reads GERSRP. The chain crosses the membrane as a helical span at residues 37-57; the sequence is LVISILSCAFAVAAIVGPIIG. Residues 58–67 lie on the Cytoplasmic side of the membrane; it reads GAFTTHVTWR. A helical transmembrane segment spans residues 68 to 88; the sequence is WCFYINLPIGGLAIIMFLLTY. The Vacuolar portion of the chain corresponds to 89–132; it reads KAENKGILQQIKDAIGTISSFTFSKFRHQVNFKRLMNGIIFKFD. The chain crosses the membrane as a helical span at residues 133–153; the sequence is FFGFALCSAGLVLFLLGLTFG. Residues 154–163 are Cytoplasmic-facing; the sequence is GNKYSWNSGQ. The helical transmembrane segment at 164–184 threads the bilayer; sequence VIAYLVLGVLLFIFSLVYDFF. The Vacuolar segment spans residues 185-205; sequence LFDKFNPEPDNISYRPLLLRR. Asn-195 carries N-linked (GlcNAc...) asparagine glycosylation. A helical transmembrane segment spans residues 206–226; that stretch reads LVAKPAIIIINMVTFLLCTGY. Over 227-248 the chain is Cytoplasmic; sequence NGQMIYSVQFFQLIFASSAWKA. Residues 249–269 form a helical membrane-spanning segment; it reads GLHLIPIVITNVIAAIASGVI. The Vacuolar portion of the chain corresponds to 270-277; that stretch reads TKKLGLVK. The chain crosses the membrane as a helical span at residues 278–298; sequence PLLIFGGVLGVIGAGLMTLMT. Residues 299–306 are Cytoplasmic-facing; sequence NTSTKSTQ. A helical transmembrane segment spans residues 307–327; sequence IGVLLLPGFSLGFALQASLMS. Over 328–415 the chain is Vacuolar; it reads AQLQITKDRP…STIGNILSDS (88 aa). Residues 416–436 traverse the membrane as a helical segment; that stretch reads IKNVFWMDLGFYALGFLFCSF. At 437–458 the chain is on the cytoplasmic side; the sequence is SSNKKLIIPKKDETPEDNLEDK.

It belongs to the major facilitator superfamily.

It localises to the vacuole membrane. Transporter required for vacuolar uptake of histidine and lysine. The sequence is that of Vacuolar basic amino acid transporter 3 (VBA3) from Saccharomyces cerevisiae (strain ATCC 204508 / S288c) (Baker's yeast).